Here is a 228-residue protein sequence, read N- to C-terminus: Protein ARV 2 (228 aa).

2 helical membrane passes run 37-57 (EVADEYVECELLIIFIDLILH) and 80-100 (LLWKLVLAYLLLDTYRSLLLR). The N-linked (GlcNAc...) asparagine glycan is linked to asparagine 107. A run of 3 helical transmembrane segments spans residues 123 to 143 (VLSANFAFVFSFAFAAKLMLV), 150 to 170 (ILLTILISSYVKIFLFAMPVW), and 176 to 196 (VIFIVDMLVLTSNAVALKVMT).

Belongs to the ARV1 family. As to expression, restricted to tissues in which cells are actively dividing or expanding. Mostly expressed in roots and flowers, and, to a lower extent, in stems and leaves.

Its subcellular location is the endoplasmic reticulum membrane. In terms of biological role, mediator of sterol homeostasis involved in sterol uptake, trafficking and distribution into membranes. Also regulates the sphingolipid metabolism. The polypeptide is Protein ARV 2 (Arabidopsis thaliana (Mouse-ear cress)).